We begin with the raw amino-acid sequence, 88 residues long: Putative membrane protein insertion efficiency factor (88 aa).

The protein belongs to the UPF0161 family.

It is found in the cell membrane. Its function is as follows. Could be involved in insertion of integral membrane proteins into the membrane. The protein is Putative membrane protein insertion efficiency factor (yrcB) of Lactococcus lactis subsp. lactis (strain IL1403) (Streptococcus lactis).